Here is a 116-residue protein sequence, read N- to C-terminus: Large ribosomal subunit protein bL17 (116 aa).

This sequence belongs to the bacterial ribosomal protein bL17 family. In terms of assembly, part of the 50S ribosomal subunit. Contacts protein L32.

The polypeptide is Large ribosomal subunit protein bL17 (Dictyoglomus turgidum (strain DSM 6724 / Z-1310)).